Reading from the N-terminus, the 954-residue chain is Isoleucine--tRNA ligase (954 aa).

The 'HIGH' region motif lies at 60 to 70 (PYANGALHMGH). L-isoleucyl-5'-AMP is bound at residue E564. The 'KMSKS' region signature appears at 605–609 (KMSKS). An ATP-binding site is contributed by K608. Positions 923, 926, 943, and 946 each coordinate Zn(2+).

The protein belongs to the class-I aminoacyl-tRNA synthetase family. IleS type 1 subfamily. Monomer. Zn(2+) serves as cofactor.

It localises to the cytoplasm. It catalyses the reaction tRNA(Ile) + L-isoleucine + ATP = L-isoleucyl-tRNA(Ile) + AMP + diphosphate. Functionally, catalyzes the attachment of isoleucine to tRNA(Ile). As IleRS can inadvertently accommodate and process structurally similar amino acids such as valine, to avoid such errors it has two additional distinct tRNA(Ile)-dependent editing activities. One activity is designated as 'pretransfer' editing and involves the hydrolysis of activated Val-AMP. The other activity is designated 'posttransfer' editing and involves deacylation of mischarged Val-tRNA(Ile). This is Isoleucine--tRNA ligase from Synechococcus sp. (strain ATCC 27144 / PCC 6301 / SAUG 1402/1) (Anacystis nidulans).